The primary structure comprises 829 residues: Periplasmic nitrate reductase (829 aa).

Positions 1–27 (MNRRDFMKANAVIAAASAAGLALPAGA) form a signal peptide, tat-type signal. In terms of domain architecture, 4Fe-4S Mo/W bis-MGD-type spans 39–95 (LEWNKAPCRFCGTGCSVMVATREGKVVATHGDANSEVNRGLSCIKGYFLSKIMYGRD). Positions 46, 49, 53, and 81 each coordinate [4Fe-4S] cluster. Mo-bis(molybdopterin guanine dinucleotide) is bound by residues Lys-83, Gln-150, Asn-175, Cys-179, 212–219 (WGSNMAEM), 243–247 (STFEH), 262–264 (QTD), Met-373, Gln-377, Asn-483, 509–510 (SD), Lys-532, Asp-559, and 719–728 (TGRVLEHWHS). Trp-795 is a substrate binding site. Mo-bis(molybdopterin guanine dinucleotide) is bound by residues Asn-803 and Lys-820.

It belongs to the prokaryotic molybdopterin-containing oxidoreductase family. NasA/NapA/NarB subfamily. Component of the periplasmic nitrate reductase NapAB complex composed of NapA and NapB. Requires [4Fe-4S] cluster as cofactor. The cofactor is Mo-bis(molybdopterin guanine dinucleotide). In terms of processing, predicted to be exported by the Tat system. The position of the signal peptide cleavage has not been experimentally proven.

It is found in the periplasm. It catalyses the reaction 2 Fe(II)-[cytochrome] + nitrate + 2 H(+) = 2 Fe(III)-[cytochrome] + nitrite + H2O. Its function is as follows. Catalytic subunit of the periplasmic nitrate reductase complex NapAB. Receives electrons from NapB and catalyzes the reduction of nitrate to nitrite. The protein is Periplasmic nitrate reductase of Shewanella denitrificans (strain OS217 / ATCC BAA-1090 / DSM 15013).